The following is a 376-amino-acid chain: 4-hydroxy-3-methylbut-2-en-1-yl diphosphate synthase (flavodoxin) (376 aa).

Residues C270, C273, C305, and E312 each contribute to the [4Fe-4S] cluster site.

The protein belongs to the IspG family. Requires [4Fe-4S] cluster as cofactor.

The enzyme catalyses (2E)-4-hydroxy-3-methylbut-2-enyl diphosphate + oxidized [flavodoxin] + H2O + 2 H(+) = 2-C-methyl-D-erythritol 2,4-cyclic diphosphate + reduced [flavodoxin]. It participates in isoprenoid biosynthesis; isopentenyl diphosphate biosynthesis via DXP pathway; isopentenyl diphosphate from 1-deoxy-D-xylulose 5-phosphate: step 5/6. Functionally, converts 2C-methyl-D-erythritol 2,4-cyclodiphosphate (ME-2,4cPP) into 1-hydroxy-2-methyl-2-(E)-butenyl 4-diphosphate. This is 4-hydroxy-3-methylbut-2-en-1-yl diphosphate synthase (flavodoxin) from Colwellia psychrerythraea (strain 34H / ATCC BAA-681) (Vibrio psychroerythus).